Here is a 1035-residue protein sequence, read N- to C-terminus: Enteropeptidase (1035 aa).

Gly-2 carries the N-myristoyl glycine lipid modification. Topologically, residues 2–18 (GSKRSVPSRHRSLTTYE) are cytoplasmic. A helical; Signal-anchor for type II membrane protein membrane pass occupies residues 19–47 (VMFAVLFVILVALCAGLIAVSWLSIQGSV). Residues 48–1035 (KDAAFGKSHE…FTEWIQSFLH (988 aa)) are Extracellular-facing. The region spanning 54 to 169 (KSHEARGTLK…NSIDITASLE (116 aa)) is the SEA domain. 4 N-linked (GlcNAc...) asparagine glycosylation sites follow: Asn-116, Asn-147, Asn-170, and Asn-194. Residues 197–238 (IECPPDSRLCADALKCIAIDLFCDGELNCPDGSDEDNKTCAT) enclose the LDL-receptor class A 1 domain. 4 disulfide bridges follow: Cys-199-Cys-212, Cys-206-Cys-225, Cys-219-Cys-236, and Cys-240-Cys-269. Residues Asn-233, Asn-263, Asn-264, Asn-404, Asn-456, Asn-486, Asn-519, Asn-550, and Asn-646 are each glycosylated (N-linked (GlcNAc...) asparagine). A CUB 1 domain is found at 240–350 (CDGRFLLTGS…IGFKVTYTAF (111 aa)). Residues 358 to 520 (YEKINCNFED…ISLTYGICNV (163 aa)) enclose the MAM domain. Cys-540 and Cys-568 are disulfide-bonded. One can recognise a CUB 2 domain in the interval 540 to 650 (CGGPHDLWEP…QGFKANFTTG (111 aa)). Positions 657–695 (EPCKEDNFQCKDGECIPLVNLCDGFPHCKDGSDEAHCVR) constitute an LDL-receptor class A 2 domain. 3 disulfide bridges follow: Cys-659-Cys-671, Cys-666-Cys-684, and Cys-678-Cys-693. An SRCR domain is found at 694 to 787 (VRLFNGTTDS…LILLQCNYKS (94 aa)). Asn-698, Asn-722, Asn-741, and Asn-762 each carry an N-linked (GlcNAc...) asparagine glycan. 6 cysteine pairs are disulfide-bonded: Cys-773-Cys-783, Cys-788-Cys-912, Cys-826-Cys-842, Cys-926-Cys-993, Cys-957-Cys-972, and Cys-983-Cys-1011. Residues 801-1035 (IVGGSDSREG…FTEWIQSFLH (235 aa)) enclose the Peptidase S1 domain. The active-site Charge relay system is the His-841. A glycan (N-linked (GlcNAc...) asparagine) is linked at Asn-864. The Charge relay system role is filled by Asp-892. Residues Asn-903 and Asn-965 are each glycosylated (N-linked (GlcNAc...) asparagine). Ser-987 serves as the catalytic Charge relay system.

It belongs to the peptidase S1 family. As to quaternary structure, heterodimer of a catalytic (light) chain and a multidomain (heavy) chain linked by a disulfide bond. Post-translationally, the chains are derived from a single precursor that is cleaved by a trypsin-like protease. Intestinal brush border.

The protein resides in the membrane. It carries out the reaction Activation of trypsinogen by selective cleavage of 6-Lys-|-Ile-7 bond.. Functionally, responsible for initiating activation of pancreatic proteolytic proenzymes (trypsin, chymotrypsin and carboxypeptidase A). It catalyzes the conversion of trypsinogen to trypsin which in turn activates other proenzymes including chymotrypsinogen, procarboxypeptidases, and proelastases. The chain is Enteropeptidase (TMPRSS15) from Bos taurus (Bovine).